Reading from the N-terminus, the 694-residue chain is Heat shock protein homolog SSE1 (694 aa).

The tract at residues 671 to 694 (AQRSADSEAKKDATPEGDAQMDLD) is disordered. Residues 675 to 684 (ADSEAKKDAT) show a composition bias toward basic and acidic residues.

It belongs to the heat shock protein 70 family.

Its subcellular location is the cytoplasm. The chain is Heat shock protein homolog SSE1 (SSE1) from Candida glabrata (strain ATCC 2001 / BCRC 20586 / JCM 3761 / NBRC 0622 / NRRL Y-65 / CBS 138) (Yeast).